A 334-amino-acid polypeptide reads, in one-letter code: D-alanine--D-alanine ligase (334 aa).

An ATP-grasp domain is found at 110–306; the sequence is KHVLKSLGID…FDHVVDLIVQ (197 aa). 138–190 contributes to the ATP binding site; the sequence is LPYPFVIKPVRGGSTIGVHAIFSKSEYLDLSAHADTLEDRMIVEEYVSGQEVQ. Mg(2+) is bound by residues D258, E272, and N274.

It belongs to the D-alanine--D-alanine ligase family. It depends on Mg(2+) as a cofactor. Requires Mn(2+) as cofactor.

It is found in the cytoplasm. It carries out the reaction 2 D-alanine + ATP = D-alanyl-D-alanine + ADP + phosphate + H(+). Its pathway is cell wall biogenesis; peptidoglycan biosynthesis. Its function is as follows. Cell wall formation. The protein is D-alanine--D-alanine ligase of Anaplasma marginale (strain Florida).